The primary structure comprises 519 residues: Cytochrome P450 52A10 (519 aa).

C466 provides a ligand contact to heme.

It belongs to the cytochrome P450 family. It depends on heme as a cofactor.

The protein localises to the membrane. Its function is as follows. Together with an NADPH cytochrome P450 the enzyme system catalyzes the terminal hydroxylation as the first step in the assimilation of alkanes and fatty acids. The sequence is that of Cytochrome P450 52A10 (CYP52A10) from Candida maltosa (Yeast).